Here is a 354-residue protein sequence, read N- to C-terminus: Clavesin-1 (354 aa).

The CRAL-TRIO domain maps to 118–279 (IKRALIDGFP…EFGGTLPPYD (162 aa)). Residues 317-354 (RECSPKPMKRSQSVVEAGTLKHEEKGENENTQPLLALD) form a disordered region. Residues 335-344 (TLKHEEKGEN) show a composition bias toward basic and acidic residues. The segment covering 345–354 (ENTQPLLALD) has biased composition (polar residues).

As to quaternary structure, forms a complex with clathrin heavy chain and gamma-adaptin. In terms of tissue distribution, expressed in brain with no expression detected in non-neuronal tissues (at protein level).

It localises to the golgi apparatus. The protein localises to the trans-Golgi network membrane. It is found in the early endosome membrane. The protein resides in the cytoplasmic vesicle. Its subcellular location is the clathrin-coated vesicle. Its function is as follows. Required for normal morphology of late endosomes and/or lysosomes in neurons. Binds phosphatidylinositol 3,5-bisphosphate (PtdIns(3,5)P2). The protein is Clavesin-1 of Rattus norvegicus (Rat).